We begin with the raw amino-acid sequence, 472 residues long: Membrane-bound lytic murein transglycosylase F (472 aa).

An N-terminal signal peptide occupies residues 1–24; it reads MRLLVIFLLALLLMACKEAPKPLA. Residues 25–259 form a non-LT domain region; the sequence is DPRTTKEIIV…HLIDRYYGHA (235 aa). The segment at 260-472 is LT domain; the sequence is DRLKPVDVTT…NGFGNTLSQE (213 aa). E306 is a catalytic residue.

The protein in the N-terminal section; belongs to the bacterial solute-binding protein 3 family. This sequence in the C-terminal section; belongs to the transglycosylase Slt family.

Its subcellular location is the cell outer membrane. It catalyses the reaction Exolytic cleavage of the (1-&gt;4)-beta-glycosidic linkage between N-acetylmuramic acid (MurNAc) and N-acetylglucosamine (GlcNAc) residues in peptidoglycan, from either the reducing or the non-reducing ends of the peptidoglycan chains, with concomitant formation of a 1,6-anhydrobond in the MurNAc residue.. Murein-degrading enzyme that degrades murein glycan strands and insoluble, high-molecular weight murein sacculi, with the concomitant formation of a 1,6-anhydromuramoyl product. Lytic transglycosylases (LTs) play an integral role in the metabolism of the peptidoglycan (PG) sacculus. Their lytic action creates space within the PG sacculus to allow for its expansion as well as for the insertion of various structures such as secretion systems and flagella. This is Membrane-bound lytic murein transglycosylase F from Methylobacillus flagellatus (strain ATCC 51484 / DSM 6875 / VKM B-1610 / KT).